We begin with the raw amino-acid sequence, 180 residues long: Ribulose bisphosphate carboxylase small subunit, chloroplastic 3 (180 aa).

Residues Met-1 to Lys-56 constitute a chloroplast transit peptide.

It belongs to the RuBisCO small chain family. In terms of assembly, heterohexadecamer of 8 large and 8 small subunits.

It is found in the plastid. Its subcellular location is the chloroplast. Its function is as follows. RuBisCO catalyzes two reactions: the carboxylation of D-ribulose 1,5-bisphosphate, the primary event in carbon dioxide fixation, as well as the oxidative fragmentation of the pentose substrate. Both reactions occur simultaneously and in competition at the same active site. Although the small subunit is not catalytic it is essential for maximal activity. Binds to abscisic acid (ABA); only half of the possible binding sites are occupied in the crystal; and there are indications this is a low affinity site. The chain is Ribulose bisphosphate carboxylase small subunit, chloroplastic 3 (RBCS.3A) from Pisum sativum (Garden pea).